The sequence spans 317 residues: L-lactate dehydrogenase 2 (317 aa).

NAD(+) contacts are provided by residues Val-16, Asp-37, Lys-42, Tyr-68, and 82–83 (GA). Gln-85 and Arg-91 together coordinate substrate. Residues Thr-104, 121–123 (ASN), and Thr-146 each bind NAD(+). Position 123–126 (123–126 (NPVD)) interacts with substrate. 151 to 154 (DTTR) lines the substrate pocket. Residues Arg-156 and His-171 each coordinate beta-D-fructose 1,6-bisphosphate. His-178 functions as the Proton acceptor in the catalytic mechanism. Tyr-223 is modified (phosphotyrosine). Thr-232 is a substrate binding site.

It belongs to the LDH/MDH superfamily. LDH family. As to quaternary structure, homotetramer.

The protein resides in the cytoplasm. It catalyses the reaction (S)-lactate + NAD(+) = pyruvate + NADH + H(+). It functions in the pathway fermentation; pyruvate fermentation to lactate; (S)-lactate from pyruvate: step 1/1. With respect to regulation, allosterically activated by fructose 1,6-bisphosphate (FBP). Functionally, catalyzes the conversion of lactate to pyruvate. This chain is L-lactate dehydrogenase 2, found in Enterococcus faecalis (strain ATCC 700802 / V583).